The chain runs to 185 residues: Ribosome-recycling factor (185 aa).

The protein belongs to the RRF family.

Its subcellular location is the cytoplasm. Functionally, responsible for the release of ribosomes from messenger RNA at the termination of protein biosynthesis. May increase the efficiency of translation by recycling ribosomes from one round of translation to another. This chain is Ribosome-recycling factor, found in Clostridium acetobutylicum (strain ATCC 824 / DSM 792 / JCM 1419 / IAM 19013 / LMG 5710 / NBRC 13948 / NRRL B-527 / VKM B-1787 / 2291 / W).